The following is a 156-amino-acid chain: tRNA (cytidine(34)-2'-O)-methyltransferase (156 aa).

S-adenosyl-L-methionine-binding residues include glycine 102, leucine 124, and serine 132.

It belongs to the class IV-like SAM-binding methyltransferase superfamily. RNA methyltransferase TrmH family. TrmL subfamily. Homodimer.

The protein resides in the cytoplasm. It carries out the reaction cytidine(34) in tRNA + S-adenosyl-L-methionine = 2'-O-methylcytidine(34) in tRNA + S-adenosyl-L-homocysteine + H(+). The enzyme catalyses 5-carboxymethylaminomethyluridine(34) in tRNA(Leu) + S-adenosyl-L-methionine = 5-carboxymethylaminomethyl-2'-O-methyluridine(34) in tRNA(Leu) + S-adenosyl-L-homocysteine + H(+). In terms of biological role, methylates the ribose at the nucleotide 34 wobble position in the two leucyl isoacceptors tRNA(Leu)(CmAA) and tRNA(Leu)(cmnm5UmAA). Catalyzes the methyl transfer from S-adenosyl-L-methionine to the 2'-OH of the wobble nucleotide. This is tRNA (cytidine(34)-2'-O)-methyltransferase from Burkholderia cenocepacia (strain HI2424).